The primary structure comprises 178 residues: Oligoribonuclease (178 aa).

In terms of domain architecture, Exonuclease spans 7–168 (LIWIDLEMTG…DDIRESIAEL (162 aa)). Y128 is a catalytic residue.

It belongs to the oligoribonuclease family.

It localises to the cytoplasm. Functionally, 3'-to-5' exoribonuclease specific for small oligoribonucleotides. The chain is Oligoribonuclease from Pseudomonas savastanoi pv. phaseolicola (strain 1448A / Race 6) (Pseudomonas syringae pv. phaseolicola (strain 1448A / Race 6)).